A 129-amino-acid chain; its full sequence is MSWQTILAIGSGGFIGAVLRAYFNGIISHKMPHDIPFGTLGVNLVGSFIMGILIAYFMYSTIFSLHVKSFLSTGVLGALTTYSTFAIESFLLLNSGHIALALANISLNAFGSILMAGGGFYIIKLSLRA.

4 helical membrane passes run 6–26 (ILAI…FNGI), 35–55 (IPFG…ILIA), 73–93 (TGVL…FLLL), and 98–118 (IALA…MAGG). G77 and T80 together coordinate Na(+).

Belongs to the fluoride channel Fluc/FEX (TC 1.A.43) family.

It localises to the cell inner membrane. It catalyses the reaction fluoride(in) = fluoride(out). With respect to regulation, na(+) is not transported, but it plays an essential structural role and its presence is essential for fluoride channel function. Fluoride-specific ion channel. Important for reducing fluoride concentration in the cell, thus reducing its toxicity. In Sulfurimonas denitrificans (strain ATCC 33889 / DSM 1251) (Thiomicrospira denitrificans (strain ATCC 33889 / DSM 1251)), this protein is Fluoride-specific ion channel FluC.